Here is a 456-residue protein sequence, read N- to C-terminus: Exodeoxyribonuclease 7 large subunit (456 aa).

The protein belongs to the XseA family. Heterooligomer composed of large and small subunits.

Its subcellular location is the cytoplasm. The enzyme catalyses Exonucleolytic cleavage in either 5'- to 3'- or 3'- to 5'-direction to yield nucleoside 5'-phosphates.. Bidirectionally degrades single-stranded DNA into large acid-insoluble oligonucleotides, which are then degraded further into small acid-soluble oligonucleotides. This Lactobacillus delbrueckii subsp. bulgaricus (strain ATCC BAA-365 / Lb-18) protein is Exodeoxyribonuclease 7 large subunit.